We begin with the raw amino-acid sequence, 745 residues long: Cytoplasmic polyadenylation element-binding protein 3 (745 aa).

Disordered stretches follow at residues 1-45 (MNLN…KSPT), 94-180 (VGSK…TNNS), and 204-283 (NKAN…FGEL). Positions 162-175 (LNFERDAEQKKDST) are enriched in basic and acidic residues. A compositionally biased stretch (polar residues) spans 219-229 (ETPTDSPQKGF). The segment covering 230–240 (SSSTESSPSDS) has biased composition (low complexity). Positions 241–255 (MNQFPSREHFTSANE) are enriched in polar residues. Residues 264–276 (FQQEHGNKNRDSD) show a composition bias toward basic and acidic residues. The region spanning 297 to 319 (IFVGGVPWDITEAALKDSFGEFG) is the RRM domain.

Cytoplasmic polyadenylation element binding protein that binds to and regulates the translation of specific mRNAs. May not be required for oogenesis. The chain is Cytoplasmic polyadenylation element-binding protein 3 (cpb-3) from Caenorhabditis elegans.